Consider the following 196-residue polypeptide: Putative archaetidylserine decarboxylase proenzyme (196 aa).

Catalysis depends on S164, which acts as the Schiff-base intermediate with substrate; via pyruvic acid. S164 is subject to Pyruvic acid (Ser); by autocatalysis.

It belongs to the phosphatidylserine decarboxylase family. PSD-A subfamily. In terms of assembly, heterodimer of a large membrane-associated beta subunit and a small pyruvoyl-containing alpha subunit. It depends on pyruvate as a cofactor. Post-translationally, is synthesized initially as an inactive proenzyme. Formation of the active enzyme involves a self-maturation process in which the active site pyruvoyl group is generated from an internal serine residue via an autocatalytic post-translational modification. Two non-identical subunits are generated from the proenzyme in this reaction, and the pyruvate is formed at the N-terminus of the alpha chain, which is derived from the carboxyl end of the proenzyme. The post-translation cleavage follows an unusual pathway, termed non-hydrolytic serinolysis, in which the side chain hydroxyl group of the serine supplies its oxygen atom to form the C-terminus of the beta chain, while the remainder of the serine residue undergoes an oxidative deamination to produce ammonia and the pyruvoyl prosthetic group on the alpha chain.

It is found in the cell membrane. The enzyme catalyses archaetidylserine + H(+) = archaetidylethanolamine + CO2. In terms of biological role, catalyzes the formation of archaetidylethanolamine (PtdEtn) from archaetidylserine (PtdSer). The chain is Putative archaetidylserine decarboxylase proenzyme from Halobacterium salinarum (strain ATCC 700922 / JCM 11081 / NRC-1) (Halobacterium halobium).